The sequence spans 214 residues: Phosphatidylserine decarboxylase proenzyme (214 aa).

The Schiff-base intermediate with substrate; via pyruvic acid role is filled by serine 182. A Pyruvic acid (Ser); by autocatalysis modification is found at serine 182.

It belongs to the phosphatidylserine decarboxylase family. PSD-A subfamily. As to quaternary structure, heterodimer of a large membrane-associated beta subunit and a small pyruvoyl-containing alpha subunit. It depends on pyruvate as a cofactor. Is synthesized initially as an inactive proenzyme. Formation of the active enzyme involves a self-maturation process in which the active site pyruvoyl group is generated from an internal serine residue via an autocatalytic post-translational modification. Two non-identical subunits are generated from the proenzyme in this reaction, and the pyruvate is formed at the N-terminus of the alpha chain, which is derived from the carboxyl end of the proenzyme. The post-translation cleavage follows an unusual pathway, termed non-hydrolytic serinolysis, in which the side chain hydroxyl group of the serine supplies its oxygen atom to form the C-terminus of the beta chain, while the remainder of the serine residue undergoes an oxidative deamination to produce ammonia and the pyruvoyl prosthetic group on the alpha chain.

Its subcellular location is the cell membrane. It carries out the reaction a 1,2-diacyl-sn-glycero-3-phospho-L-serine + H(+) = a 1,2-diacyl-sn-glycero-3-phosphoethanolamine + CO2. Its pathway is phospholipid metabolism; phosphatidylethanolamine biosynthesis; phosphatidylethanolamine from CDP-diacylglycerol: step 2/2. Functionally, catalyzes the formation of phosphatidylethanolamine (PtdEtn) from phosphatidylserine (PtdSer). This chain is Phosphatidylserine decarboxylase proenzyme, found in Burkholderia ambifaria (strain MC40-6).